Reading from the N-terminus, the 299-residue chain is ATP phosphoribosyltransferase (299 aa).

It belongs to the ATP phosphoribosyltransferase family. Long subfamily. Equilibrium between an active dimeric form, an inactive hexameric form and higher aggregates. Interconversion between the various forms is largely reversible and is influenced by the natural substrates and inhibitors of the enzyme. Requires Mg(2+) as cofactor.

The protein resides in the cytoplasm. The enzyme catalyses 1-(5-phospho-beta-D-ribosyl)-ATP + diphosphate = 5-phospho-alpha-D-ribose 1-diphosphate + ATP. Its pathway is amino-acid biosynthesis; L-histidine biosynthesis; L-histidine from 5-phospho-alpha-D-ribose 1-diphosphate: step 1/9. With respect to regulation, feedback inhibited by histidine. Catalyzes the condensation of ATP and 5-phosphoribose 1-diphosphate to form N'-(5'-phosphoribosyl)-ATP (PR-ATP). Has a crucial role in the pathway because the rate of histidine biosynthesis seems to be controlled primarily by regulation of HisG enzymatic activity. The polypeptide is ATP phosphoribosyltransferase (Pectobacterium atrosepticum (strain SCRI 1043 / ATCC BAA-672) (Erwinia carotovora subsp. atroseptica)).